The following is a 1112-amino-acid chain: MSLIGNGPSVPPSSTKASLFSSPTTSANPTGGLFGSTTGGSSLFAPKTAGSTTTSTTQPTSTTGLGTSLFGTSTTANTQNTANAARPSLFTAGNSIFGTSTTQPGLGASSLTTAATSNQQAQQQQQQRQQHQQAAPTGALFDSLLARNKKQAEGETALGELPSLQLGLADLRQRLRKLGPSSDRPIEPGKAHYFLAASGVDPGAAVRDLGALGLQAKTERTAASVGPAAGPSGVSTTGFGTGLGEVDVDTYLSNLQTKTTLSMIADGLERSARDFDAFLEENVTLEWEAQRKRIYQHFGIKPRDSSVAGTTTAQPTATPSKDGQGTFGRSRRKASQPPPGERPAQRMSILGRSTMMRSVIGTPTRIGAHAPEFSDVEARKDSSGAAVASVDDRFLREKQAKLAEKIREFNDARQRGTPFYICRDLADLESKSGDRHGPHIVEAYRAVMEMVGEHPDAGEAPRERQFAKMYLDPNTQSANALAMRKQILKGATTFLEKQFWNEVNSLIAKYPQDANLGGLPDVVSKIKAYIRLRIARKTLVPDNVELQQINGEYVWAIVFYLLRAGFVTEAAQYVNSNQAHFRAIDRTFSGYINSYASSEERRLKRQMQDRCMSEYNQRIRNAPEGSIDPFRMACYKIIGRCDLSNRSLDGLQTDVNDWIWLQFNLARETDRSLELAGESYGLAELQASIREIGLKHFPKTAAEDTNGSFGMFFYLQILAGMFEQAIAYLYPFSYVDAVHFAIALTYYGLLRPVDAASAGNELLSHNTRSMPQINFGRMLGYYTRDFRAANPAAAVDYLVLICLNADEAAGGQQAQAALCHEALRELVLESREFSRLIGDIRPDGRRIRGVIEERGPLIALGQEDDFIRTITLQAASFADDNGRTTDAVLLYHLAEDYDTVVSIVSRALSEAISLEIGEDPMRLIPVKPRVTNAEGQVEEAAPGSSLSLAAIDDPVELAKAMMGMYERDHMFWQKIREPNRVACSVLLQMADIKSLVEQGRWAECLDKIRALDILPLTARGDPGTIRSYAARFPSLAQPVAINVPNLLMWTVLCCMRQRERLAGGQFAGNESTARLMMDELKQMTVDLMAYTSQLRYRLPPHLHEALARASAD.

Disordered stretches follow at residues 1–74, 101–136, and 303–350; these read MSLI…GTST, TTQP…QAAP, and RDSS…MSIL. Positions 12 to 29 are enriched in polar residues; the sequence is PSSTKASLFSSPTTSANP. Over residues 39 to 74 the composition is skewed to low complexity; the sequence is GGSSLFAPKTAGSTTTSTTQPTSTTGLGTSLFGTST. The span at 101–118 shows a compositional bias: polar residues; that stretch reads TTQPGLGASSLTTAATSN. Residues 113–135 are a coiled coil; sequence TAATSNQQAQQQQQQRQQHQQAA. Composition is skewed to low complexity over residues 119–135 and 310–319; these read QQAQ…QQAA and TTTAQPTATP. The stretch at 394–415 forms a coiled coil; the sequence is FLREKQAKLAEKIREFNDARQR.

This sequence belongs to the nucleoporin interacting component (NIC) family. Component of the nuclear pore complex (NPC). NPC constitutes the exclusive means of nucleocytoplasmic transport. NPCs allow the passive diffusion of ions and small molecules and the active, nuclear transport receptor-mediated bidirectional transport of macromolecules such as proteins, RNAs, ribonucleoparticles (RNPs), and ribosomal subunits across the nuclear envelope. Due to its 8-fold rotational symmetry, all subunits are present with 8 copies or multiples thereof. Part of a tetrameric NUP192-NUP170-NIC96-NUP53 or NUP188-NUP170-NIC96-NUP53 module.

It localises to the nucleus. The protein resides in the nuclear pore complex. The protein localises to the nucleus membrane. Functions as a component of the nuclear pore complex (NPC). NPC components, collectively referred to as nucleoporins (NUPs), can play the role of both NPC structural components and of docking or interaction partners for transiently associated nuclear transport factors. NIC96, which is localized to the core of the NPC and the distal ring of the nuclear basket, is required for de novo assembly of NPCs. The sequence is that of Nucleoporin NIC96 (NIC96) from Chaetomium thermophilum (strain DSM 1495 / CBS 144.50 / IMI 039719) (Thermochaetoides thermophila).